The chain runs to 388 residues: Regulator of G-protein signaling 20 (388 aa).

Residues 138 to 199 (PGRPSGGRPL…TPGAAPGQPG (62 aa)) form a disordered region. Over residues 185–197 (PAAQDTPGAAPGQ) the composition is skewed to low complexity. Residues 262 to 378 (SFDKLMVTPA…MNSAVYKDLL (117 aa)) enclose the RGS domain.

As to quaternary structure, forms a complex with G(alpha)z/i2 subunits and mu-opioid receptors; the formation of this complex results in mu-opioid receptor desensitization. Interacts with OPRM1. Fatty acylated. Heavily palmitoylated in the cysteine string motif. Post-translationally, N- and O-glycosylated in synapsomal membranes. In terms of processing, serine phosphorylated in synapsomal membranes. Sumoylated with SUMO1 and SUMO2 in synaptosomes. The sumoylated forms act as a scaffold for sequestering mu-opioid receptor-activated G(alpha) subunits. In terms of tissue distribution, isoform 5 is expressed in brain at high levels in the caudate nucleus and temporal lobe.

The protein localises to the membrane. Its subcellular location is the nucleus. It localises to the cytoplasm. Functionally, inhibits signal transduction by increasing the GTPase activity of G protein alpha subunits thereby driving them into their inactive GDP-bound form. Binds selectively to G(z)-alpha and G(alpha)-i2 subunits, accelerates their GTPase activity and regulates their signaling activities. The G(z)-alpha activity is inhibited by the phosphorylation and palmitoylation of the G-protein. Negatively regulates mu-opioid receptor-mediated activation of the G-proteins. The protein is Regulator of G-protein signaling 20 (RGS20) of Homo sapiens (Human).